A 475-amino-acid chain; its full sequence is Ribulose bisphosphate carboxylase large chain (475 aa).

A propeptide spanning residues 1–2 is cleaved from the precursor; it reads MS. An N-acetylproline modification is found at P3. An N6,N6,N6-trimethyllysine modification is found at K14. Substrate contacts are provided by N123 and T173. The active-site Proton acceptor is the K175. K177 lines the substrate pocket. Mg(2+)-binding residues include K201, D203, and E204. K201 is modified (N6-carboxylysine). H294 functions as the Proton acceptor in the catalytic mechanism. Substrate contacts are provided by R295, H327, and S379.

The protein belongs to the RuBisCO large chain family. Type I subfamily. Heterohexadecamer of 8 large chains and 8 small chains; disulfide-linked. The disulfide link is formed within the large subunit homodimers. Requires Mg(2+) as cofactor. Post-translationally, the disulfide bond which can form in the large chain dimeric partners within the hexadecamer appears to be associated with oxidative stress and protein turnover.

It is found in the plastid. The protein localises to the chloroplast. It carries out the reaction 2 (2R)-3-phosphoglycerate + 2 H(+) = D-ribulose 1,5-bisphosphate + CO2 + H2O. The enzyme catalyses D-ribulose 1,5-bisphosphate + O2 = 2-phosphoglycolate + (2R)-3-phosphoglycerate + 2 H(+). Functionally, ruBisCO catalyzes two reactions: the carboxylation of D-ribulose 1,5-bisphosphate, the primary event in carbon dioxide fixation, as well as the oxidative fragmentation of the pentose substrate in the photorespiration process. Both reactions occur simultaneously and in competition at the same active site. This Equisetum arvense (Field horsetail) protein is Ribulose bisphosphate carboxylase large chain.